Here is a 104-residue protein sequence, read N- to C-terminus: ATP synthase subunit c (104 aa).

2 helical membrane passes run 31 to 51 (SVVAAGIGLGLAALGGAIGMG) and 75 to 95 (MFIALAMIEAQVIYALVVAMI).

Belongs to the ATPase C chain family. F-type ATPases have 2 components, F(1) - the catalytic core - and F(0) - the membrane proton channel. F(1) has five subunits: alpha(3), beta(3), gamma(1), delta(1), epsilon(1). F(0) has three main subunits: a(1), b(2) and c(10-14). The alpha and beta chains form an alternating ring which encloses part of the gamma chain. F(1) is attached to F(0) by a central stalk formed by the gamma and epsilon chains, while a peripheral stalk is formed by the delta and b chains.

It is found in the cell inner membrane. Its function is as follows. F(1)F(0) ATP synthase produces ATP from ADP in the presence of a proton or sodium gradient. F-type ATPases consist of two structural domains, F(1) containing the extramembraneous catalytic core and F(0) containing the membrane proton channel, linked together by a central stalk and a peripheral stalk. During catalysis, ATP synthesis in the catalytic domain of F(1) is coupled via a rotary mechanism of the central stalk subunits to proton translocation. Key component of the F(0) channel; it plays a direct role in translocation across the membrane. A homomeric c-ring of between 10-14 subunits forms the central stalk rotor element with the F(1) delta and epsilon subunits. The protein is ATP synthase subunit c of Aliarcobacter butzleri (strain RM4018) (Arcobacter butzleri).